A 146-amino-acid polypeptide reads, in one-letter code: MRGREFPLVLLALVLCQAPRGPAAPVSVGGGTVLAKMYPRGNHWAVGHLMGKKSTGESPYAYEGGNMKEQLREYIRWEDATRNLLSLLEAKGIGSHQPPQWEPLGIRQSTWDSKDGSNFKDMGPRLKVDGLSAPGSQHEGRIPQLN.

A signal peptide spans 1-23; that stretch reads MRGREFPLVLLALVLCQAPRGPA. Residue Met50 is modified to Methionine amide. A propeptide spanning residues 54-146 is cleaved from the precursor; sequence STGESPYAYE…QHEGRIPQLN (93 aa). Residues 95 to 146 are disordered; it reads SHQPPQWEPLGIRQSTWDSKDGSNFKDMGPRLKVDGLSAPGSQHEGRIPQLN. Residues 112-128 show a composition bias toward basic and acidic residues; the sequence is DSKDGSNFKDMGPRLKV.

Belongs to the bombesin/neuromedin-B/ranatensin family.

The protein resides in the secreted. Its subcellular location is the cytoplasmic vesicle. It localises to the secretory vesicle lumen. It is found in the cell projection. The protein localises to the neuron projection. Stimulates the release of gastrin and other gastrointestinal hormones. Contributes to the perception of prurient stimuli and to the transmission of itch signals in the spinal cord that promote scratching behavior. Contributes primarily to nonhistaminergic itch sensation. In one study, shown to act in the amygdala as part of an inhibitory network which inhibits memory specifically related to learned fear. In another study, shown to act on vasoactive intestinal peptide (VIP)-expressing cells in the auditory cortex, most likely via extrasynaptic diffusion from local and long-range sources, to mediate disinhibition of glutamatergic cells via VIP cell-specific GRPR signaling which leads to enhanced auditory fear memories. Contributes to the regulation of food intake. Inhibits voltage-gated sodium channels but enhances voltage-gated potassium channels in hippocampal neurons. Induces sighing by acting directly on the pre-Botzinger complex, a cluster of several thousand neurons in the ventrolateral medulla responsible for inspiration during respiratory activity. Functionally, induces an itch response through activation of receptors present on mast cells, triggering mast cell degranulation. This is Gastrin-releasing peptide (GRP) from Sus scrofa (Pig).